The chain runs to 772 residues: Semaphorin-3A (772 aa).

The first 22 residues, 1 to 22 (MGWLRGIALLSLGVLLAGRVNC), serve as a signal peptide directing secretion. The Sema domain occupies 31 to 514 (RLKLSYKEML…SATGVSQLPL (484 aa)). The N-linked (GlcNAc...) asparagine glycan is linked to Asn53. Cys103 and Cys114 are disulfide-bonded. Residue Asn125 is glycosylated (N-linked (GlcNAc...) asparagine). Intrachain disulfides connect Cys132–Cys141, Cys269–Cys381, Cys293–Cys341, and Cys517–Cys535. The Ig-like C2-type domain maps to 576–665 (PSGQTLEEKI…GFIQTLLKVT (90 aa)). Residue Asn591 is glycosylated (N-linked (GlcNAc...) asparagine). A disulfide bridge links Cys650 with Cys723. The tract at residues 730–772 (DRKQRRQRPANAQVNTNKWKHLQENKKGRNRRTHEFERAPRSV) is disordered. Basic and acidic residues predominate over residues 750-772 (HLQENKKGRNRRTHEFERAPRSV).

It belongs to the semaphorin family. In terms of tissue distribution, expressed at relatively high levels in brain and muscle, moderate levels in lung, bursa, and heart and virtually absent in liver. Collapsin-1, -2, -3, and -5 bind to overlapping but distinct axon tracts.

Its subcellular location is the secreted. Its function is as follows. Induces the collapse and paralysis of neuronal growth cones. Could serve as a ligand that guides specific growth cones by a motility-inhibiting mechanism. Binds to neuropilin. This Gallus gallus (Chicken) protein is Semaphorin-3A (SEMA3A).